Consider the following 712-residue polypeptide: Ribosomal RNA large subunit methyltransferase K/L (712 aa).

The THUMP domain maps to 46–157 (GAYQALLHSR…RENMVVSLDL (112 aa)).

Belongs to the methyltransferase superfamily. RlmKL family.

Its subcellular location is the cytoplasm. It catalyses the reaction guanosine(2445) in 23S rRNA + S-adenosyl-L-methionine = N(2)-methylguanosine(2445) in 23S rRNA + S-adenosyl-L-homocysteine + H(+). It carries out the reaction guanosine(2069) in 23S rRNA + S-adenosyl-L-methionine = N(2)-methylguanosine(2069) in 23S rRNA + S-adenosyl-L-homocysteine + H(+). Specifically methylates the guanine in position 2445 (m2G2445) and the guanine in position 2069 (m7G2069) of 23S rRNA. This chain is Ribosomal RNA large subunit methyltransferase K/L, found in Actinobacillus pleuropneumoniae serotype 5b (strain L20).